Here is a 415-residue protein sequence, read N- to C-terminus: MADICPSRSEPTLSFTQGLILGQLSVVLLLAAFIKFFIFGDPPSPEVVASIRATDRRSRTLAHKKSILSLRETNALQLVQNPALNKKHVLRPGPPILTIGSILSKTYYKVDSHQPESLDWFNVLIAQTIAQFRSDAQHDDAILSSLSKALNGTARPDFLDEIKVTELSLGEDFPIFSNCRIIPVDEDGLSFGTGKAFDANMATREGARLQARMDVDLSDMITLAVETKLLLNYPKRLSAVLPVALAVSVVRFSGTLSISFIPSNPSNNEPAKMIFTFLDDYRLDFSIRSLLGSRSRLQDVPKIAQLVESRLHRWFDERCVEPRFQEIALPNMWPRKKNTRGGDETISDVERSMSKAKGVDIAKDVREEARKEIEAEAHGGADRVPDSLRYRHRPRADEEFPGAGSMPGSMPGSMP.

The Lumenal segment spans residues 1-18 (MADICPSRSEPTLSFTQG). A helical transmembrane segment spans residues 19 to 39 (LILGQLSVVLLLAAFIKFFIF). Over 40-415 (GDPPSPEVVA…MPGSMPGSMP (376 aa)) the chain is Cytoplasmic. In terms of domain architecture, SMP-LTD spans 114 to 330 (QPESLDWFNV…EPRFQEIALP (217 aa)). The segment covering 373–389 (IEAEAHGGADRVPDSLR) has biased composition (basic and acidic residues). Residues 373–415 (IEAEAHGGADRVPDSLRYRHRPRADEEFPGAGSMPGSMPGSMP) form a disordered region. The segment covering 404–415 (GSMPGSMPGSMP) has biased composition (low complexity).

The protein belongs to the MMM1 family. Homodimer. Component of the ER-mitochondria encounter structure (ERMES) or MDM complex, composed of mmm-1, mdm10, mdm12 and mdm34. A mmm-1 homodimer associates with one molecule of mdm12 on each side in a pairwise head-to-tail manner, and the SMP-LTD domains of mmm-1 and mdm12 generate a continuous hydrophobic tunnel for phospholipid trafficking.

The protein localises to the endoplasmic reticulum membrane. Component of the ERMES/MDM complex, which serves as a molecular tether to connect the endoplasmic reticulum (ER) and mitochondria. Components of this complex are involved in the control of mitochondrial shape and protein biogenesis, and function in nonvesicular lipid trafficking between the ER and mitochondria. The mdm12-mmm-1 subcomplex functions in the major beta-barrel assembly pathway that is responsible for biogenesis of all outer membrane beta-barrel proteins, and acts in a late step after the SAM complex. The mdm10-mdm12-mmm-1 subcomplex further acts in the TOM40-specific pathway after the action of the mdm12-mmm-1 complex. Essential for establishing and maintaining the structure of mitochondria and maintenance of mtDNA nucleoids. This Neurospora crassa (strain ATCC 24698 / 74-OR23-1A / CBS 708.71 / DSM 1257 / FGSC 987) protein is Maintenance of mitochondrial morphology protein 1 (mmm-1).